Consider the following 712-residue polypeptide: uncharacterized protein (712 aa).

3 disordered regions span residues 1 to 46 (MAKI…NNLN), 107 to 264 (NIKP…IPQA), and 370 to 389 (QPQH…QQNQ). Low complexity-rich tracts occupy residues 10-46 (INNS…NNLN), 107-143 (NIKP…SNSS), and 161-173 (TFDN…NSSN). The segment covering 178–187 (ISPTTSPQLE) has biased composition (polar residues). Low complexity-rich tracts occupy residues 188–198 (QHQQYQQQQHQ) and 241–264 (PLQQ…IPQA).

This is an uncharacterized protein from Dictyostelium discoideum (Social amoeba).